Here is a 330-residue protein sequence, read N- to C-terminus: Molybdate/tungstate import ATP-binding protein WtpC (330 aa).

In terms of domain architecture, ABC transporter spans 3-232 (LMVEGISKDY…PASEEVAKFL (230 aa)). 34-41 (GPSGAGKT) contacts ATP.

It belongs to the ABC transporter superfamily. Sulfate/tungstate importer (TC 3.A.1.6) family. In terms of assembly, the complex is composed of two ATP-binding proteins (WtpC), two transmembrane proteins (WtpB) and a solute-binding protein (WtpA).

The protein resides in the cell membrane. The catalysed reaction is tungstate(in) + ATP + H2O = tungstate(out) + ADP + phosphate + H(+). In terms of biological role, part of the ABC transporter complex WtpABC involved in molybdate/tungstate import. Responsible for energy coupling to the transport system. In Thermococcus kodakarensis (strain ATCC BAA-918 / JCM 12380 / KOD1) (Pyrococcus kodakaraensis (strain KOD1)), this protein is Molybdate/tungstate import ATP-binding protein WtpC (wtpC).